The chain runs to 256 residues: Ras-related protein Rab-26 (256 aa).

Positions 1–53 (MSRKKTPKSKAGSAPATSALPAANGPRPVRPGTARPGPEAPPNGPPQPGRSSV) are disordered. Residues 38–48 (PEAPPNGPPQP) are compositionally biased toward pro residues. Residues serine 72, glycine 73, valine 74, glycine 75, lysine 76, threonine 77, cysteine 78, serine 95, and threonine 96 each coordinate GTP. Threonine 77 contributes to the Mg(2+) binding site. 2 consecutive short sequence motifs (switch) follow at residues 86 to 101 (GAFL…GIDF) and 119 to 136 (DTAG…YYRD). Residues threonine 96 and aspartate 119 each contribute to the Mg(2+) site. GTP-binding residues include glycine 122, asparagine 177, lysine 178, aspartate 180, alanine 208, and lysine 209. 2 S-geranylgeranyl cysteine lipidation sites follow: cysteine 253 and cysteine 254.

Belongs to the small GTPase superfamily. Rab family. Requires Mg(2+) as cofactor.

The protein localises to the cell membrane. It carries out the reaction GTP + H2O = GDP + phosphate + H(+). Its activity is regulated as follows. Regulated by guanine nucleotide exchange factors (GEFs) which promote the exchange of bound GDP for free GTP. Regulated by GTPase activating proteins (GAPs) which increase the GTP hydrolysis activity. Inhibited by GDP dissociation inhibitors (GDIs). In terms of biological role, the small GTPases Rab are key regulators of intracellular membrane trafficking, from the formation of transport vesicles to their fusion with membranes. Rabs cycle between an inactive GDP-bound form and an active GTP-bound form that is able to recruit to membranes different set of downstream effectors directly responsible for vesicle formation, movement, tethering and fusion. RAB26 mediates transport of ADRA2A and ADRA2B from the Golgi to the cell membrane. Plays a role in the maturation of zymogenic granules and in pepsinogen secretion in the stomach. Plays a role in the secretion of amylase from acinar granules in the parotid gland. In Bos taurus (Bovine), this protein is Ras-related protein Rab-26 (RAB26).